Consider the following 296-residue polypeptide: Nucleotide-binding protein SSA_0810 (296 aa).

13-20 (GMSGAGKT) provides a ligand contact to ATP. GTP is bound at residue 63-66 (DMRS). The tract at residues 277-296 (WPVNSSHRDKNRRKETVNRS) is disordered. Over residues 282–296 (SHRDKNRRKETVNRS) the composition is skewed to basic and acidic residues.

This sequence belongs to the RapZ-like family.

Its function is as follows. Displays ATPase and GTPase activities. This Streptococcus sanguinis (strain SK36) protein is Nucleotide-binding protein SSA_0810.